Reading from the N-terminus, the 320-residue chain is MRNINTYDWMKKWMTRSISILVMIHMITRTSISNAYPIFAQQGYENPREATGRIVCANCHLAKKPVNIEVPQSVLPDTVFEAVVQIPCDMQIKQVLANGKKGALNVGAVLILPEGFELAPPDRISPEIKEKIGNLYFQNYRPNQKEILVIGPVPGQKYSEIVFPILSPNPATNKEVHFLKYPIYVGGNRGRGQIYPDGSKSNNTVYNASTTGRVSKILRKEKGGYEITIDNASDGRQVVDIVPPGPELLISEGEFIKVDQPLTNNPNVGGFGQGDAEIVLQDPLRVQGLLLLLASVILAQIFLVLKKKQFEKVQLAEMNF.

An N-terminal signal peptide occupies residues M1–A35. Positions 36, 56, 59, and 60 each coordinate heme. The chain crosses the membrane as a helical span at residues V286 to K306.

Belongs to the cytochrome f family. The 4 large subunits of the cytochrome b6-f complex are cytochrome b6, subunit IV (17 kDa polypeptide, petD), cytochrome f and the Rieske protein, while the 4 small subunits are PetG, PetL, PetM and PetN. The complex functions as a dimer. It depends on heme as a cofactor.

Its subcellular location is the plastid. The protein resides in the chloroplast thylakoid membrane. Component of the cytochrome b6-f complex, which mediates electron transfer between photosystem II (PSII) and photosystem I (PSI), cyclic electron flow around PSI, and state transitions. In Cycas taitungensis (Prince sago), this protein is Cytochrome f.